The primary structure comprises 199 residues: MARCKS-related protein (199 aa).

Positions 1-199 are disordered; sequence MGSQSSKAPR…PTPAGAEQNE (199 aa). Residue Gly-2 is the site of N-myristoyl glycine attachment. Thr-14 carries the post-translational modification Phosphothreonine. Positions 16 to 26 are enriched in low complexity; sequence EEAAGASPAKA. A phosphoserine mark is found at Ser-22, Ser-36, and Ser-48. Positions 53 to 64 are enriched in low complexity; it reads GTDEAAGATGDA. The residue at position 71 (Ser-71) is a Phosphoserine. Over residues 76-85 the composition is skewed to basic and acidic residues; sequence AKGDAPPKET. Thr-85 is subject to Phosphothreonine. The span at 86 to 98 shows a compositional bias: basic residues; it reads PKKKKKFSFKKPF. The tract at residues 87-110 is effector domain involved in lipid-binding and calmodulin-binding; sequence KKKKKFSFKKPFKLSGLSFKRNRK. Phosphoserine; by PKC occurs at positions 93, 101, and 104. A Phosphoserine modification is found at Ser-119. Ser-120 is subject to Phosphoserine; by MAPK8. Ser-135 bears the Phosphoserine mark. Thr-148 carries the post-translational modification Phosphothreonine; by MAPK8. Ser-151 is subject to Phosphoserine. Residues 156–167 show a composition bias toward low complexity; it reads AKGAEAGAACKG. Position 170 is a phosphothreonine (Thr-170). Residues 181–199 show a composition bias toward low complexity; that stretch reads STPSGPESGPTPAGAEQNE. The residue at position 182 (Thr-182) is a Phosphothreonine; by MAPK8. Phosphothreonine is present on Thr-191.

The protein belongs to the MARCKS family. In terms of assembly, binds to filamentous actin (F-actin), but not to monomeric G-actin, independently of its phosphorylation status. Interacts with calmodulin. Phosphorylated. Phosphorylation at Ser-120 and Thr-182 is non-redundantly catalyzed by MAPK8 in vivo. Phosphorylation at Thr-148 is preferentially catalyzed by MAPK8 in vivo, but this modification can also be catalyzed by other kinases in the absence of MAPK8. May be phosphorylated by protein kinase C, which disrupts the interaction with calmodulin.

The protein localises to the cytoplasm. The protein resides in the cytoskeleton. Its subcellular location is the cell membrane. Controls cell movement by regulating actin cytoskeleton homeostasis and filopodium and lamellipodium formation. When unphosphorylated, induces cell migration. When phosphorylated by MAPK8, induces actin bundles formation and stabilization, thereby reducing actin plasticity, hence restricting cell movement, including neuronal migration. May be involved in coupling the protein kinase C and calmodulin signal transduction systems. The protein is MARCKS-related protein (MARCKSL1) of Oryctolagus cuniculus (Rabbit).